Consider the following 183-residue polypeptide: Capsid protein (183 aa).

A disordered region spans residues 136–183 (NAPILSTLPETTVVRRRGRSPRRRTPSPRRRRSQSPRRRRSQSPASQC). Over residues 149–176 (VRRRGRSPRRRTPSPRRRRSQSPRRRRS) the composition is skewed to basic residues. Ser155, Ser162, and Ser170 each carry phosphoserine; by host. A 1; half-length repeat occupies 155 to 161 (SPRRRTP). Residues 155 to 177 (SPRRRTPSPRRRRSQSPRRRRSQ) are 3 X 8 AA repeats of S-P-R-R-R-[PR]-S-Q. The Bipartite nuclear localization signal signature appears at 158–175 (RRTPSPRRRRSQSPRRRR). Tandem repeats lie at residues 162-169 (SPRRRRSQ) and 170-177 (SPRRRRSQ). The segment at 177–183 (QSPASQC) is RNA binding.

Belongs to the orthohepadnavirus core antigen family. In terms of assembly, homodimerizes, then multimerizes. Interacts with cytosol exposed regions of viral L glycoprotein present in the reticulum-to-Golgi compartment. Interacts with human FLNB. Phosphorylated form interacts with host importin alpha; this interaction depends on the exposure of the NLS, which itself depends upon genome maturation and/or phosphorylation of the capsid protein. Interacts with host NUP153. In terms of processing, phosphorylated by host SRPK1, SRPK2, and maybe protein kinase C or GAPDH. Phosphorylation is critical for pregenomic RNA packaging. Protein kinase C phosphorylation is stimulated by HBx protein and may play a role in transport of the viral genome to the nucleus at the late step during the viral replication cycle.

Its subcellular location is the virion. The protein localises to the host cytoplasm. In terms of biological role, self assembles to form an icosahedral capsid. Most capsids appear to be large particles with an icosahedral symmetry of T=4 and consist of 240 copies of capsid protein, though a fraction forms smaller T=3 particles consisting of 180 capsid proteins. Entering capsids are transported along microtubules to the nucleus. Phosphorylation of the capsid is thought to induce exposure of nuclear localization signal in the C-terminal portion of the capsid protein that allows binding to the nuclear pore complex via the importin (karyopherin-) alpha and beta. Capsids are imported in intact form through the nuclear pore into the nuclear basket, where it probably binds NUP153. Only capsids that contain the mature viral genome can release the viral DNA and capsid protein into the nucleoplasm. Immature capsids get stuck in the basket. Capsids encapsulate the pre-genomic RNA and the P protein. Pre-genomic RNA is reverse-transcribed into DNA while the capsid is still in the cytoplasm. The capsid can then either be directed to the nucleus, providing more genomes for transcription, or bud through the endoplasmic reticulum to provide new virions. The sequence is that of Capsid protein from Hylobatidae (gibbons).